Reading from the N-terminus, the 274-residue chain is Undecaprenyl-diphosphatase (274 aa).

Helical transmembrane passes span 1–21, 42–62, 81–101, 107–127, 142–162, 184–204, 213–233, and 248–268; these read MDWLYSLIYGIVEGITEFLPI, VKDTFEVVIQGGAILAVLVYY, LWLGVVLACIPAVILGVLFGD, LFRPSVVAWALIVGGVLMWLL, ISAGKALAIGAAQCLALLWPG, TKFSFYLGVPTLGGAALLDFI, IGVVNVAIGAVTSFVVAYFAI, and FAVYRVVVGVLILVLIARGVL.

It belongs to the UppP family.

It is found in the cell membrane. The enzyme catalyses di-trans,octa-cis-undecaprenyl diphosphate + H2O = di-trans,octa-cis-undecaprenyl phosphate + phosphate + H(+). Its function is as follows. Catalyzes the dephosphorylation of undecaprenyl diphosphate (UPP). Confers resistance to bacitracin. This chain is Undecaprenyl-diphosphatase, found in Deinococcus radiodurans (strain ATCC 13939 / DSM 20539 / JCM 16871 / CCUG 27074 / LMG 4051 / NBRC 15346 / NCIMB 9279 / VKM B-1422 / R1).